Consider the following 445-residue polypeptide: Tyrosine--tRNA ligase, mitochondrial (445 aa).

L-tyrosine is bound at residue Tyr-33. Asp-37 lines the ATP pocket. Residues 38–47 carry the 'HIGH' region motif; it reads PTAASLHVGN. Asp-77, Tyr-184, Gln-188, Asp-191, and Gln-210 together coordinate L-tyrosine. The 'KMSKS' region signature appears at 245–249; sequence KLGKS. Lys-248 lines the ATP pocket. The 62-residue stretch at 384–445 folds into the S4 RNA-binding domain; sequence QPFSRLLRTL…GKRTFVLDSL (62 aa).

Belongs to the class-I aminoacyl-tRNA synthetase family. Homodimer.

It localises to the mitochondrion matrix. It catalyses the reaction tRNA(Tyr) + L-tyrosine + ATP = L-tyrosyl-tRNA(Tyr) + AMP + diphosphate + H(+). Its function is as follows. Catalyzes the attachment of tyrosine to tRNA(Tyr) in a two-step reaction: tyrosine is first activated by ATP to form Tyr-AMP and then transferred to the acceptor end of tRNA(Tyr). The chain is Tyrosine--tRNA ligase, mitochondrial from Schizosaccharomyces pombe (strain 972 / ATCC 24843) (Fission yeast).